A 518-amino-acid polypeptide reads, in one-letter code: Filamentous growth regulator 15 (518 aa).

The span at 1-41 (MESTLSVSDEKLTNSSTALNNCGDNKESSQVLTTANTTTDN) shows a compositional bias: polar residues. Disordered stretches follow at residues 1–63 (MEST…SKER), 75–101 (VDPNQQSKNTVSDSVQDTTGVPSDHGK), and 261–307 (KSRS…KQHR). Positions 42-52 (QQVQPKSQHQQ) are enriched in low complexity. Polar residues predominate over residues 77-95 (PNQQSKNTVSDSVQDTTGV). Residues 262-274 (SRSRSKVTKKRKV) show a composition bias toward basic residues. The segment covering 283–298 (SNTATATTSVTTPDAN) has biased composition (low complexity). The segment at 374 to 406 (HECQLPSAEEPHKLCLRRFSRKYELIRHQETVH) adopts a C2H2-type zinc-finger fold. The tract at residues 492–518 (RKSSGDDTNYMETSDLESGEEEVTFNK) is disordered. The span at 505–518 (SDLESGEEEVTFNK) shows a compositional bias: acidic residues.

It is found in the nucleus. Probable transcription factor involved in the regulation of filamentous growth. This is Filamentous growth regulator 15 (FGR15) from Candida albicans (strain SC5314 / ATCC MYA-2876) (Yeast).